A 327-amino-acid polypeptide reads, in one-letter code: Aquaporin-1 (327 aa).

The interval 1 to 34 (MSSNDSNDTDKQHTRLDPTGVDDAYIPPEQPETK) is disordered. At 1-48 (MSSNDSNDTDKQHTRLDPTGVDDAYIPPEQPETKHHRFKISKDTLRNH) the chain is on the cytoplasmic side. Residues 49-69 (FIAAAGEFCGTFMFLWCAYVI) traverse the membrane as a helical segment. Residues 70–91 (CNVANHDVALVAAPDGSHPGQL) lie on the Extracellular side of the membrane. A helical membrane pass occupies residues 92 to 112 (IMIAIGFGFSVMFSIWCFAGV). Topologically, residues 113–136 (SGGALNPAVSLSLCLARAVSPTRC) are cytoplasmic. Positions 118–120 (NPA) match the NPA 1 motif. The helical transmembrane segment at 137-157 (VVMWVSQIVAGMAAGGAASAM) threads the bilayer. Topologically, residues 158–176 (TPGEVLFANSLGLGCSRTR) are extracellular. A helical transmembrane segment spans residues 177–197 (GLFLEMFGTAILCLTVLMTAV). Residues 198–203 (EKRETN) are Cytoplasmic-facing. The helical transmembrane segment at 204–224 (FMAALPIGISLFIAHVALTAY) threads the bilayer. Residues 225 to 248 (TGTGVNPARSLGAAVAARYFPHYH) lie on the Extracellular side of the membrane. The NPA 2 motif lies at 230-232 (NPA). A helical transmembrane segment spans residues 249–269 (WIYWIGPLLGSILAWSVWQLL). At 270–327 (QILDYTTYVTAEKAASTKEKAQKKVKPAVPLLWLKSNFSLLFFISRSLALNVIIFGKN) the chain is on the cytoplasmic side.

It belongs to the MIP/aquaporin (TC 1.A.8) family.

It is found in the endoplasmic reticulum membrane. Its subcellular location is the cell membrane. Water channel required to facilitate the transport of water across membranes. Involved in sporulation, freeze tolerance and osmotolerance. Is non-functional in most laboratory strains. The polypeptide is Aquaporin-1 (AQY1) (Saccharomyces cerevisiae (strain Lalvin EC1118 / Prise de mousse) (Baker's yeast)).